Reading from the N-terminus, the 716-residue chain is ATP-dependent DNA helicase DinG (716 aa).

The HD1 domain N-terminus stretch occupies residues 1–114 (MALTAALKAQ…PDLKFTAAFG (114 aa)). The region spanning 17–294 (ALQEQIPDFI…TCMEQFRPKT (278 aa)) is the Helicase ATP-binding domain. Residues Ile-26, Gln-31, Lys-60, and Thr-61 each contribute to the ATP site. The interval 115–216 (RGRYVCPRNL…FFVARREIQE (102 aa)) is [4Fe-4S] domain. Residues Cys-120, Cys-194, Cys-199, and Cys-205 each contribute to the [4Fe-4S] cluster site. Residues 217-261 (AEVVVANHALVMAAMESEAVLPDPKNLLLVLDEGHHLPDVARDAL) form an HD1 domain middle region. Positions 248 to 251 (DEGH) match the DEAH box motif. An arch domain region spans residues 262–438 (EMSAEITAPW…LHLWFHCVGI (177 aa)). The interval 439–491 (RVSDQLERLLWRSIPHIIVTSATLRSLNSFSRLQEMSGLKEKAGDRFVALDSP) is HD1 domain middle. An HD2 domain region spans residues 492–716 (FNHCEQGKIV…KTKSPRRRRR (225 aa)). The ATP site is built by Asp-599, Arg-656, and Arg-659.

Belongs to the helicase family. DinG subfamily. Type 1 sub-subfamily. Monomer in solution. [4Fe-4S] cluster serves as cofactor. The cofactor is Mg(2+).

The catalysed reaction is Couples ATP hydrolysis with the unwinding of duplex DNA at the replication fork by translocating in the 5'-3' direction. This creates two antiparallel DNA single strands (ssDNA). The leading ssDNA polymer is the template for DNA polymerase III holoenzyme which synthesizes a continuous strand.. The enzyme catalyses ATP + H2O = ADP + phosphate + H(+). ATPase activity is 15-fold stimulated by single-stranded DNA (ssDNA). Reduction of the [4Fe-4S] cluster reversibly switches off helicase activity. Remains fully active after exposure to 100-fold excess of hydrogen peroxide, but the [4Fe-4S] cluster can be efficiently modified by nitric oxide (NO), forming the DinG-bound dinitrosyl iron complex with the concomitant inactivation of helicase activity. Helicase activity on G-quadruplex DNA is inhibited by porphyrin derivatives meso-tetra (N-methyl-4-pyridyl) porphine tetra tosylate (T4) and N-methyl mesoporphyrin IX (NMM). Helicase activity on forked duplexes is not inhibited by T4 or NMM. G-quadruplex ligands such as Pyridostatin, PhenDC3, BRACO-19 and Netropsin can alter recognition and unwinding of G-quadruplex DNAs; the effect is both ligand- and G-quadruplex DNA-specific. In terms of biological role, DNA-dependent ATPase and 5'-3' DNA helicase. Can also unwind DNA:RNA hybrid duplexes. Is active on D-loops, R-loops, and on forked structures. Unwinds G-quadruplex DNA in a 5'-3' direction; unwinding efficiency differs on different substrates. Does not appear to unwind replication forks or Holliday junctions. Translocates on single-stranded (ss)DNA with a 5'-3' polarity. In vitro at high concentrations also unwinds in a 3'-5' direction. May be involved in recombinational DNA repair and the resumption of replication after DNA damage. The [4Fe-4S] cluster is redox active at cellular potentials and is involved in DNA-mediated charge-transport signaling between DNA repair proteins from distinct pathways. DinG cooperates at long-range with endonuclease III, a base excision repair enzyme, using DNA charge transport to redistribute to regions of DNA damage. Binds 10-11 nucleotides of ssDNA in a positively-charged groove across the helicase domains. This Escherichia coli (strain K12) protein is ATP-dependent DNA helicase DinG.